Consider the following 299-residue polypeptide: 4-hydroxybenzoate octaprenyltransferase (299 aa).

8 helical membrane-spanning segments follow: residues 33-53, 56-76, 107-127, 151-171, 180-200, 214-234, 247-267, and 278-298; these read VGFL…AGGV, WWTL…GCVI, LLMF…MNQL, LPQV…FAAI, WLLY…CAMV, AILF…LMLF, HTYW…FIIA, and AFMH…LATT.

This sequence belongs to the UbiA prenyltransferase family. Mg(2+) is required as a cofactor.

Its subcellular location is the cell inner membrane. The catalysed reaction is all-trans-octaprenyl diphosphate + 4-hydroxybenzoate = 4-hydroxy-3-(all-trans-octaprenyl)benzoate + diphosphate. It participates in cofactor biosynthesis; ubiquinone biosynthesis. Catalyzes the prenylation of para-hydroxybenzoate (PHB) with an all-trans polyprenyl group. Mediates the second step in the final reaction sequence of ubiquinone-8 (UQ-8) biosynthesis, which is the condensation of the polyisoprenoid side chain with PHB, generating the first membrane-bound Q intermediate 3-octaprenyl-4-hydroxybenzoate. The protein is 4-hydroxybenzoate octaprenyltransferase of Xylella fastidiosa (strain 9a5c).